Reading from the N-terminus, the 267-residue chain is MAPWALLSPGVLVRTGHTVLTWGITLVLFLHDTELRQWEEQGELLLPLTFLLLVLGSLLLYLAVSLMDPGYVNVQPQPQEELKEEQTAMVPPAIPLRRCRYCLVLQPLRARHCRECRRCVRRYDHHCPWMENCVGERNHPLFVVYLALQLVVLLWGLYLAWSGLRFFQPWGQWLRSSGLLFATFLLLSLFSLVASLLLVSHLYLVASNTTTWEFISSHRIAYLRQRPSNPFDRGLTRNLAHFFCGWPSGSWETLWAEEEEEGSSPAV.

The Cytoplasmic portion of the chain corresponds to M1 to P9. Residues G10–L30 traverse the membrane as a helical segment. The Lumenal segment spans residues H31–E43. Residues L44–V64 traverse the membrane as a helical segment. Residues S65–P140 are Cytoplasmic-facing. The 51-residue stretch at R97–A147 folds into the DHHC domain. Catalysis depends on C127, which acts as the S-palmitoyl cysteine intermediate. The chain crosses the membrane as a helical span at residues L141–W161. Residues S162–G178 are Lumenal-facing. Residues L179–V199 form a helical membrane-spanning segment. The Cytoplasmic segment spans residues S200–V267.

Belongs to the DHHC palmitoyltransferase family. As to expression, widely expressed.

It is found in the golgi apparatus membrane. It localises to the endoplasmic reticulum membrane. It carries out the reaction L-cysteinyl-[protein] + hexadecanoyl-CoA = S-hexadecanoyl-L-cysteinyl-[protein] + CoA. In terms of biological role, palmitoyltransferase that catalyzes the addition of palmitate onto various protein substrates. Has a palmitoyltransferase activity toward gephyrin/GPHN, regulating its clustering at synapses and its function in gamma-aminobutyric acid receptor clustering. Thereby, indirectly regulates GABAergic synaptic transmission. Negatively regulates NLRP3-driven inflammation. Catalyzes NLRP3 palmitoylation, leading to its degradation via the chaperone-mediated autophagy (CMA) process. The protein is Palmitoyltransferase ZDHHC12 of Homo sapiens (Human).